A 471-amino-acid chain; its full sequence is Uronate isomerase (471 aa).

The protein belongs to the metallo-dependent hydrolases superfamily. Uronate isomerase family.

The catalysed reaction is D-glucuronate = D-fructuronate. It carries out the reaction aldehydo-D-galacturonate = keto-D-tagaturonate. It functions in the pathway carbohydrate metabolism; pentose and glucuronate interconversion. The sequence is that of Uronate isomerase from Xanthomonas campestris pv. campestris (strain 8004).